The primary structure comprises 602 residues: MTDILVSKIRNFCIIAHIDHGKSTLADRLLQDTGTVQQRDMQEQFLDSMDLERERGITIKLQAARMKYKADDSQEYVLNLIDTPGHVDFSYEVSRSLQACEGALLVVDASQGVEAQTLANVYLALENNLEIIPVLNKVDLPGADAEKIKQEIEEIIGLDTSNAINCSAKTGVGIKDILEAIVRRVPAPQDEIKLPTKALIFDSYYDPYRGVIVYFRVISGSLNKREKILLMASKKNYELDEIGIMAPDQQQVDELHAGEVGYLAASIKSVADARVGDTITLLNSPANDPLPGYKTANPMVFCGLFPTDADQFPDLRVSLEKLQLSDAALKYEPETSSAMGFGFRCGFLGLLHMEIVQERLEREYDLDLIVTAPSVIYKVNLNQQEHIFIDNPSTIPDPQLRESIEEPYVKMEIYAPNEFNGTLMGLCQERRGVFIDMKYITTDRVTLIYEIPLAEVVTDFFDQMKSRTQGYASMEYHLIGYRKNDLVRLDVLINSERADPLTSIVHKDKAYGIGRSLVEKLKELIPKQQFKIPIQASIGSRIIASESISALRKDVLSKCYGGDISRKKKLLKKQAKGKKRMKAMGKVEVPQEAFMAVLKLNQ.

The tr-type G domain occupies 7–189 (SKIRNFCIIA…AIVRRVPAPQ (183 aa)). Residues 19-24 (DHGKST) and 136-139 (NKVD) contribute to the GTP site.

It belongs to the TRAFAC class translation factor GTPase superfamily. Classic translation factor GTPase family. LepA subfamily.

It localises to the cell inner membrane. The catalysed reaction is GTP + H2O = GDP + phosphate + H(+). Its function is as follows. Required for accurate and efficient protein synthesis under certain stress conditions. May act as a fidelity factor of the translation reaction, by catalyzing a one-codon backward translocation of tRNAs on improperly translocated ribosomes. Back-translocation proceeds from a post-translocation (POST) complex to a pre-translocation (PRE) complex, thus giving elongation factor G a second chance to translocate the tRNAs correctly. Binds to ribosomes in a GTP-dependent manner. In Prochlorococcus marinus (strain MIT 9312), this protein is Elongation factor 4.